The chain runs to 375 residues: Succinyl-diaminopimelate desuccinylase (375 aa).

His-66 contacts Zn(2+). The active site involves Asp-68. Asp-99 provides a ligand contact to Zn(2+). Glu-133 acts as the Proton acceptor in catalysis. 3 residues coordinate Zn(2+): Glu-134, Glu-162, and His-348.

The protein belongs to the peptidase M20A family. DapE subfamily. Homodimer. It depends on Zn(2+) as a cofactor. Co(2+) serves as cofactor.

The catalysed reaction is N-succinyl-(2S,6S)-2,6-diaminopimelate + H2O = (2S,6S)-2,6-diaminopimelate + succinate. It participates in amino-acid biosynthesis; L-lysine biosynthesis via DAP pathway; LL-2,6-diaminopimelate from (S)-tetrahydrodipicolinate (succinylase route): step 3/3. Functionally, catalyzes the hydrolysis of N-succinyl-L,L-diaminopimelic acid (SDAP), forming succinate and LL-2,6-diaminopimelate (DAP), an intermediate involved in the bacterial biosynthesis of lysine and meso-diaminopimelic acid, an essential component of bacterial cell walls. The sequence is that of Succinyl-diaminopimelate desuccinylase from Pectobacterium atrosepticum (strain SCRI 1043 / ATCC BAA-672) (Erwinia carotovora subsp. atroseptica).